The primary structure comprises 59 residues: uncharacterized protein (59 aa).

The chain crosses the membrane as a helical span at residues F7–A24.

It localises to the membrane. This is an uncharacterized protein from Rickettsia prowazekii (strain Madrid E).